Consider the following 246-residue polypeptide: MDLSQARAALKAARRVAVLTGAGISAESGIPTFRDAQTGHWARFRPEDLASPDAYRRDPDLVWEWYAGRYRDVLAAQPNRGHELLAELERRKGPGFFLATQNVDGLHARAGSGSAGGELVELHGNLLQARDELTGEVFPLAAPDELTLPPLSPNGQRMRPHIVWFGEYLPVDALDAAQRAFAGAEVALVIGTSSVVYPAAGLAAETLRRGGAVIEINPEATDLTPDATFSLRESASRGLELLLEDD.

Positions 1–246 constitute a Deacetylase sirtuin-type domain; it reads MDLSQARAAL…RGLELLLEDD (246 aa). Residue 21–41 coordinates NAD(+); sequence GAGISAESGIPTFRDAQTGHW. Residues Tyr66 and Arg69 each contribute to the substrate site. 101-104 lines the NAD(+) pocket; the sequence is QNVD. Catalysis depends on His123, which acts as the Proton acceptor. NAD(+) contacts are provided by residues 191–193, 217–219, and Ala235; these read GTS and NPE.

Belongs to the sirtuin family. Class III subfamily.

The protein resides in the cytoplasm. The catalysed reaction is N(6)-acetyl-L-lysyl-[protein] + NAD(+) + H2O = 2''-O-acetyl-ADP-D-ribose + nicotinamide + L-lysyl-[protein]. The enzyme catalyses N(6)-succinyl-L-lysyl-[protein] + NAD(+) + H2O = 2''-O-succinyl-ADP-D-ribose + nicotinamide + L-lysyl-[protein]. Functionally, NAD-dependent lysine deacetylase and desuccinylase that specifically removes acetyl and succinyl groups on target proteins. Modulates the activities of several proteins which are inactive in their acylated form. The polypeptide is NAD-dependent protein deacylase (Deinococcus radiodurans (strain ATCC 13939 / DSM 20539 / JCM 16871 / CCUG 27074 / LMG 4051 / NBRC 15346 / NCIMB 9279 / VKM B-1422 / R1)).